The sequence spans 545 residues: Protein disulfide isomerase-like 1-3 (545 aa).

The segment covering methionine 1–serine 16 has biased composition (pro residues). Residues methionine 1 to serine 24 are disordered. The region spanning alanine 55–glycine 189 is the Thioredoxin 1 domain. N-linked (GlcNAc...) asparagine glycosylation is present at asparagine 87. Active-site nucleophile residues include cysteine 107 and cysteine 110. Residues cysteine 107 and cysteine 110 are joined by a disulfide bond. N-linked (GlcNAc...) asparagine glycosylation occurs at asparagine 349. Positions phenylalanine 403–leucine 545 constitute a Thioredoxin 2 domain. Active-site nucleophile residues include cysteine 453 and cysteine 456. Residues cysteine 453 and cysteine 456 are joined by a disulfide bond. The Prevents secretion from ER motif lies at lysine 542 to leucine 545.

The protein belongs to the protein disulfide isomerase family.

Its subcellular location is the endoplasmic reticulum lumen. It carries out the reaction Catalyzes the rearrangement of -S-S- bonds in proteins.. Its function is as follows. Acts as a protein-folding catalyst that interacts with nascent polypeptides to catalyze the formation, isomerization, and reduction or oxidation of disulfide bonds. May play a role in storage protein biogenesis. This chain is Protein disulfide isomerase-like 1-3 (PDIL1-3), found in Oryza sativa subsp. japonica (Rice).